The following is a 100-amino-acid chain: Biogenesis of lysosome-related organelles complex 1 subunit CNL1 (100 aa).

The stretch at 25–46 (SDRVKSLELEATRLVQRQNELV) forms a coiled coil.

Belongs to the BLOC1S4 family. In terms of assembly, component of the biogenesis of lysosome-related organelles complex-1 (BLOC-1).

It localises to the cytoplasm. Component of the biogenesis of lysosome-related organelles complex-1 (BLOC-1), a complex that is involved in endosomal cargo sorting. The polypeptide is Biogenesis of lysosome-related organelles complex 1 subunit CNL1 (CLN1) (Candida glabrata (strain ATCC 2001 / BCRC 20586 / JCM 3761 / NBRC 0622 / NRRL Y-65 / CBS 138) (Yeast)).